Consider the following 1361-residue polypeptide: Zinc finger protein GLI4 (1361 aa).

Residues 185–270 (SSFGHTPLLH…PQPPDHLTDL (86 aa)) are disordered. 2 stretches are compositionally biased toward polar residues: residues 198–208 (TFASRQQGALT) and 227–241 (NKVSSESAVSSTVNQ). 5 C2H2-type zinc fingers span residues 289 to 314 (TNCHWDGCSKEFDTQDQLVHHINNDH), 322 to 349 (FVCRWQDCSREQKPFKAQYMLVVHMRRH), 355 to 379 (HKCTFEGCFKAYSRLENLKTHLRSH), 385 to 410 (YVCDHEGCNKAFSNASDRAKHQNRTH), and 416 to 441 (YICKVPGCTKRYTDPSSLRKHVKTVH). 6 disordered regions span residues 434–527 (RKHV…TNNI), 556–584 (STVSSWQRSGRPATPETQRIHSAETGTAE), 647–720 (NERR…LPNL), 787–832 (NAGL…SMNS), 906–946 (QNRE…APGA), and 1134–1230 (DGLH…PKDN). Over residues 475–502 (SGREHSDSVSRDQEHCLQTRTIKTEDNM) the composition is skewed to basic and acidic residues. The segment covering 506–522 (SSPGGQSSCSSEPSPYG) has biased composition (low complexity). Positions 573–584 (QRIHSAETGTAE) are enriched in basic and acidic residues. Residues 653–670 (TSSTLSSAYTSRRSSGIS) are compositionally biased toward low complexity. 2 stretches are compositionally biased toward polar residues: residues 672–695 (YFSSRRSSETSQFGGRLNNSSSAD) and 710–720 (EASQHSGLPNL). The segment covering 805–821 (RASDPVRRTAGIDDKPL) has biased composition (basic and acidic residues). Polar residues-rich tracts occupy residues 913-939 (QNLQTEYSSPARNLQSNTKSFHNNTPE) and 1142-1164 (YTVQPQKNGLEPQQNTLGMSGQA). The segment covering 1172 to 1183 (PRPPAAPHPPNR) has biased composition (pro residues).

The protein belongs to the GLI C2H2-type zinc-finger protein family.

Its subcellular location is the nucleus. In terms of biological role, has an essential role in the early embryonic patterning of mesoderm and neuroectoderm. The sequence is that of Zinc finger protein GLI4 (gli4) from Xenopus laevis (African clawed frog).